The primary structure comprises 455 residues: Phosphoglucosamine mutase (455 aa).

The Phosphoserine intermediate role is filled by Ser-104. Mg(2+) is bound by residues Ser-104, Asp-253, Asp-255, and Asp-257. The residue at position 104 (Ser-104) is a Phosphoserine.

Belongs to the phosphohexose mutase family. The cofactor is Mg(2+). In terms of processing, activated by phosphorylation.

The enzyme catalyses alpha-D-glucosamine 1-phosphate = D-glucosamine 6-phosphate. Catalyzes the conversion of glucosamine-6-phosphate to glucosamine-1-phosphate. This is Phosphoglucosamine mutase from Psychrobacter arcticus (strain DSM 17307 / VKM B-2377 / 273-4).